Consider the following 518-residue polypeptide: GMP synthase [glutamine-hydrolyzing] (518 aa).

The 194-residue stretch at 8–201 folds into the Glutamine amidotransferase type-1 domain; that stretch reads TVLIIDFGSQ…VLKISNLKGN (194 aa). The active-site Nucleophile is C85. Catalysis depends on residues H175 and E177. Positions 202-393 constitute a GMPS ATP-PPase domain; the sequence is WSMASYREQT…LGLPEQFIGR (192 aa). 229 to 235 contributes to the ATP binding site; it reads SGGVDSS.

As to quaternary structure, homodimer.

The catalysed reaction is XMP + L-glutamine + ATP + H2O = GMP + L-glutamate + AMP + diphosphate + 2 H(+). The protein operates within purine metabolism; GMP biosynthesis; GMP from XMP (L-Gln route): step 1/1. Its function is as follows. Catalyzes the synthesis of GMP from XMP. The chain is GMP synthase [glutamine-hydrolyzing] from Bartonella henselae (strain ATCC 49882 / DSM 28221 / CCUG 30454 / Houston 1) (Rochalimaea henselae).